A 279-amino-acid polypeptide reads, in one-letter code: MNGIFLVNKKAGLTSHDIVYQIRKKFNIKKVGHTGTLDPFATGLLIILVGKATKLAFLFDELDKQYDGTIVLGKSYDTDDTTGEVINEAPVSFTEDDLKAILNRIVPTYKQIPPSYSAIKKAGVKAYEAARSGKPLDLPAREVSIYNFTYQINKQTIDFSTHVSKGTYIRSIARDIGLGLNTFGALSVLNRTNIDAYSQNMSKTVEDTELPDLIDHALLFEGVKKIVLNDYLIKLVKNGVVLDERQTTLNEPFIVQDEMGNYIAYYVPDNQQYKLKYLF.

The Nucleophile role is filled by Asp38.

This sequence belongs to the pseudouridine synthase TruB family. Type 1 subfamily.

The catalysed reaction is uridine(55) in tRNA = pseudouridine(55) in tRNA. Functionally, responsible for synthesis of pseudouridine from uracil-55 in the psi GC loop of transfer RNAs. The protein is tRNA pseudouridine synthase B of Acholeplasma laidlawii (strain PG-8A).